The chain runs to 349 residues: Phosphoribosylformylglycinamidine cyclo-ligase (349 aa).

This sequence belongs to the AIR synthase family.

It localises to the cytoplasm. It carries out the reaction 2-formamido-N(1)-(5-O-phospho-beta-D-ribosyl)acetamidine + ATP = 5-amino-1-(5-phospho-beta-D-ribosyl)imidazole + ADP + phosphate + H(+). The protein operates within purine metabolism; IMP biosynthesis via de novo pathway; 5-amino-1-(5-phospho-D-ribosyl)imidazole from N(2)-formyl-N(1)-(5-phospho-D-ribosyl)glycinamide: step 2/2. This is Phosphoribosylformylglycinamidine cyclo-ligase from Trichlorobacter lovleyi (strain ATCC BAA-1151 / DSM 17278 / SZ) (Geobacter lovleyi).